The chain runs to 1113 residues: Protein KIBRA (1113 aa).

WW domains are found at residues 6–39 (LPLP…DPRD) and 53–86 (DELP…DPRV). 2 coiled-coil regions span residues 107–193 (LSAQ…RGFQ) and 293–431 (NSNN…SSMQ). Position 141 is a phosphoserine (serine 141). 2 disordered regions span residues 429–448 (SMQS…SRGS) and 522–547 (RSLS…SPPC). A compositionally biased stretch (polar residues) spans 522–532 (RSLSGTPKSMT). Residues 533–542 (SLSPRSSLSS) show a composition bias toward low complexity. Position 535 is a phosphoserine (serine 535). Serine 542 is subject to Phosphoserine; by CDK1. The 124-residue stretch at 658-781 (GATRIQIALK…RSGERSTRWY (124 aa)) folds into the C2 domain. Positions 825 to 975 (LEKRQEGRSS…RSVRMKRPSS (151 aa)) are disordered. An interaction with histone H3 region spans residues 839–1113 (EDSWRYEETS…NIPALSADDV (275 aa)). Over residues 847 to 870 (TSENEAVAEEEEEEVEEEEGEEDV) the composition is skewed to acidic residues. Serine 899 is modified (phosphoserine). Phosphothreonine is present on threonine 912. The span at 924–938 (IIRSKTFSPGPQSQY) shows a compositional bias: polar residues. Phosphoserine is present on serine 927. A Phosphothreonine modification is found at threonine 929. Serine 931 bears the Phosphoserine; by CDK1 mark. Serine 947 carries the post-translational modification Phosphoserine. 2 interaction with PRKCZ regions span residues 953 to 996 (SKKP…LDLQ) and 956 to 975 (PPFV…RPSS). Residues serine 975 and serine 978 each carry the phosphoserine; by PKC/PRKCZ modification. The stretch at 1001–1032 (WHSQLTQEISVLKELKEQLEQAKSHGEKELPQ) forms a coiled coil. An ADDV motif motif is present at residues 1111–1113 (DDV).

It belongs to the WWC family. KIBRA subfamily. As to quaternary structure, homodimer. Forms heterodimers with WWC2 and WWC3. Interacts with DDN. Interacts with DYNLL1 and histone H3. The interaction with DYNLL1 is mandatory for the recruitment and transactivation functions of ESR1 or DYNLL1 to the target chromatin and the interaction with histone H3 ensures proper regulatory interaction of WWC1-DYNLL1-ESR1 complexes with target chromatin. Interacts (via WW domains) with DDR1 (via PPxY motif) in a collagen-regulated manner. Interacts with PRKCZ (via the protein kinase domain). Forms a tripartite complex with DDR1 and PRKCZ, but predominantly in the absence of collagen. Interacts (via the ADDV motif) with PATJ (via PDZ domain 8). Interacts (via WW domains) with SYNPO (via PPxY motifs). Interacts with NF2 and SNX4. Interacts with DLC1 and PRKCZ. Interacts (via WW domains) with LATS1 and LATS2. In terms of processing, phosphorylation at Ser-542 and Ser-931 by CDK1 in response to spindle damage stress regulates mitotic exit, these two sites are dephosphorylated by CDC14B. As to expression, expressed in mammary epithelial cells and breast cancer cell lines. Found in the luminal epithelium surrounding the ducts in the normal breast. In the brain, expressed in somatodendritic compartment of neurons in the cortex and hippocampus and in the cerebellum it is found in the Purkinje cells and some granule cells (at protein level). Detected in brain, heart, colon and kidney. In the kidney, expressed in glomerular podocytes, in some tubules and in the collecting duct.

It localises to the cytoplasm. The protein localises to the perinuclear region. The protein resides in the nucleus. Its subcellular location is the cell projection. It is found in the ruffle membrane. It localises to the cytosol. Functionally, regulator of the Hippo signaling pathway, also known as the Salvador-Warts-Hippo (SWH) pathway. Enhances phosphorylation of LATS1 and YAP1 and negatively regulates cell proliferation and organ growth due to a suppression of the transcriptional activity of YAP1, the major effector of the Hippo pathway. Along with NF2 can synergistically induce the phosphorylation of LATS1 and LATS2 and function in the regulation of Hippo signaling pathway. Acts as a transcriptional coactivator of ESR1 which plays an essential role in DYNLL1-mediated ESR1 transactivation. Regulates collagen-stimulated activation of the ERK/MAPK cascade. Modulates directional migration of podocytes. Plays a role in cognition and memory performance. Plays an important role in regulating AMPA-selective glutamate receptors (AMPARs) trafficking underlying synaptic plasticity and learning. The polypeptide is Protein KIBRA (Homo sapiens (Human)).